Here is a 463-residue protein sequence, read N- to C-terminus: Endoglucanase EG-1 (463 aa).

The N-terminal stretch at 1–22 is a signal peptide; the sequence is MAPSATLPLTTAILAIGRLVAA. A catalytic region spans residues 23-397; that stretch reads QQPGTSTPEV…DIGSTTNSTG (375 aa). 4 N-linked (GlcNAc...) asparagine glycosylation sites follow: Asn78, Asn164, Asn204, and Asn208. Glu218 acts as the Nucleophile in catalysis. Residue Glu223 is the Proton donor of the active site. A disordered region spans residues 390–429; sequence GSTTNSTGGNPPPPPPPASSTTFSTTRRSSTTSSSPSCTQ. An N-linked (GlcNAc...) asparagine glycan is attached at Asn394. A linker region spans residues 402–427; that stretch reads PPPPPASSTTFSTTRRSSTTSSSPSC. Residues 408–429 are compositionally biased toward low complexity; the sequence is SSTTFSTTRRSSTTSSSPSCTQ. Residues 427–463 enclose the CBM1 domain; it reads CTQTHWGQCGGIGYTGCKTCTSGTTCQYGNDYYSQCL. 2 disulfide bridges follow: Cys435-Cys452 and Cys446-Cys462.

It belongs to the glycosyl hydrolase 7 (cellulase C) family.

The protein localises to the secreted. The catalysed reaction is Endohydrolysis of (1-&gt;4)-beta-D-glucosidic linkages in cellulose, lichenin and cereal beta-D-glucans.. The biological conversion of cellulose to glucose generally requires three types of hydrolytic enzymes: (1) Endoglucanases which cut internal beta-1,4-glucosidic bonds; (2) Exocellobiohydrolases that cut the disaccharide cellobiose from the non-reducing end of the cellulose polymer chain; (3) Beta-1,4-glucosidases which hydrolyze the cellobiose and other short cello-oligosaccharides to glucose. This chain is Endoglucanase EG-1 (egl1), found in Trichoderma longibrachiatum.